A 322-amino-acid polypeptide reads, in one-letter code: Formimidoylglutamase (322 aa).

Mn(2+) contacts are provided by His-130, Asp-156, His-158, Asp-160, Cys-244, and Asp-246.

This sequence belongs to the arginase family. The cofactor is Mn(2+).

It carries out the reaction N-formimidoyl-L-glutamate + H2O = formamide + L-glutamate. The protein operates within amino-acid degradation; L-histidine degradation into L-glutamate; L-glutamate from N-formimidoyl-L-glutamate (hydrolase route): step 1/1. Catalyzes the conversion of N-formimidoyl-L-glutamate to L-glutamate and formamide. The chain is Formimidoylglutamase from Geobacillus thermodenitrificans (strain NG80-2).